Here is a 158-residue protein sequence, read N- to C-terminus: Botcinic acid biosynthesis cluster B protein 16 (158 aa).

The protein operates within polyketide biosynthesis. Functionally, part of the gene cluster B that mediates the biosynthesis of botcinic acid and its botcinin derivatives, acetate-derived polyketides that contribute to virulence when combined with the sesquiterpene botrydial. Botcinic acid and its derivatives have been shown to induce chlorosis and necrosis during host plant infection, but also have antifungal activities. Two polyketide synthases, BOA6 and BOA9, are involved in the biosynthesis of botcinins. BOA6 mediates the formation of the per-methylated tetraketide core by condensation of four units of malonyl-CoA with one unit of acetyl-CoA, which would be methylated in activated methylene groups to yield a bicyclic acid intermediate that could then either be converted to botrylactone derivatives or lose the starter acetate unit through a retro-Claisen type C-C bond cleavage to yield botcinin derivatives. The second polyketide synthase, BOA9, is probably required for the biosynthesis of the tetraketide side chain of botcinins. The methyltransferase (MT) domain within BOA6 is probably responsible for the incorporation of four methyl groups. The trans-enoyl reductase BOA5 might take over the enoyl reductase function of BOA6 that misses an ER domain. The monooxygenases BOA2, BOA3 and BOA4 might be involved in further hydroxylations at C4, C5 and C8, whereas BOA7, close to BOA9, could potentially be involved in the hydroxylation at C4 in the side chain of botcinins. This is Botcinic acid biosynthesis cluster B protein 16 from Botryotinia fuckeliana (strain B05.10) (Noble rot fungus).